The primary structure comprises 458 residues: UDP-N-acetylmuramate--L-alanine ligase (458 aa).

Residue 118-124 (GTHGKTT) participates in ATP binding.

It belongs to the MurCDEF family.

Its subcellular location is the cytoplasm. The enzyme catalyses UDP-N-acetyl-alpha-D-muramate + L-alanine + ATP = UDP-N-acetyl-alpha-D-muramoyl-L-alanine + ADP + phosphate + H(+). It functions in the pathway cell wall biogenesis; peptidoglycan biosynthesis. Functionally, cell wall formation. In Clostridium botulinum (strain Loch Maree / Type A3), this protein is UDP-N-acetylmuramate--L-alanine ligase.